Consider the following 175-residue polypeptide: MSIDDLKSKIPDFAKDVRLNLSSMASDETLTPQQKYGLFVACGIASRNADVRKALVAEAAGKVDASVIQAAKAAASIMGMNNVYYRFVHLASNKDYRTMPARLRMNVISNPGVDKIDFELWSLAVSAINGCGMCIDAHEDVLRKANVTAEAIQAAVRFASIIQSAAIALEAADTE.

Cys131 acts as the Proton donor in catalysis. Cys131 and Cys134 are oxidised to a cystine. Residue Cys134 is the Cysteine sulfenic acid (-SOH) intermediate of the active site.

It belongs to the AhpD family.

The enzyme catalyses N(6)-[(R)-dihydrolipoyl]-L-lysyl-[lipoyl-carrier protein] + a hydroperoxide = N(6)-[(R)-lipoyl]-L-lysyl-[lipoyl-carrier protein] + an alcohol + H2O. Antioxidant protein with alkyl hydroperoxidase activity. Required for the reduction of the AhpC active site cysteine residues and for the regeneration of the AhpC enzyme activity. This chain is Alkyl hydroperoxide reductase AhpD, found in Brucella abortus (strain 2308).